A 332-amino-acid chain; its full sequence is D-alanine--D-alanine ligase (332 aa).

Residues 1–17 (MPMTMTQSATNPTATPV) are compositionally biased toward polar residues. The interval 1–28 (MPMTMTQSATNPTATPVSANKASANAAT) is disordered. The span at 18 to 28 (SANKASANAAT) shows a compositional bias: low complexity. An ATP-grasp domain is found at 132–329 (KQLWHGCGLS…FEQLCWHILA (198 aa)). ATP is bound at residue 158 to 213 (VNTLGLPLIVKPVHEGSSIGMSKVNTLDELPKAYEVAAGCGDVVMAEKWITGREFT). Mg(2+) is bound by residues aspartate 283, glutamate 296, and asparagine 298.

This sequence belongs to the D-alanine--D-alanine ligase family. Mg(2+) is required as a cofactor. Mn(2+) serves as cofactor.

The protein localises to the cytoplasm. It carries out the reaction 2 D-alanine + ATP = D-alanyl-D-alanine + ADP + phosphate + H(+). It functions in the pathway cell wall biogenesis; peptidoglycan biosynthesis. Cell wall formation. In Psychrobacter sp. (strain PRwf-1), this protein is D-alanine--D-alanine ligase.